The chain runs to 1588 residues: MSLTSWFLVSSGGTRHRLPREMIFVGRDDCELMLQSRSVDKQHAVINYDASMDEHLVKDLGSLNGTFVNDVRIPEQTYITLKLEDKLRFGYDTNLFTVVRGEMRVPEEALKHEKFTIQLQLSQKSSESELPKSASAKGTDSKVEAAAEVQPRATEALKSEEKPMDVSAMPRGTPLYGQPSWWGDAEEDEQRAFKANGKPEGKSQEAGASGCSTEAKHVEGQSAAASEEALFPFCREPSYFEIPTKEFQQPSQIAESTIHEIPTKDTPSSHTAGAGHASFTIEFDDSTPGKVTIRDHVTKFTSDQRHKSKKASPGTQDLPGIQTGMMAPENKVADWLAQNNPPQMVWERTEEDSKSIKSDVPVYLKRLKGNKHDDGTQSDSENAGAHRRCSKRATLEEHLRRHHSEQKKKAQSTEKHQEQAATSSTHHRGGHGVPHGKLLKQKSEEPSVSLPFLQTALLRSSGSLGHRPSQEMDVMLKNQATSASSEKDNDDDQSDKGTYTIELENPNSEEVEARKMIDKVFGVDDNQDYNRPIINEKHKGLIKDWALNSAAVVMEERKPLSTPGFHNSEEAISSSGSKRWVSQWASLAANHTRHDPEERLMELSATVENETDTGDAGVSLRSTSCTTSLASQGERKRRTLPQLPNEEKLLESSRAKVVPQRSEIGEKQDTELQEKEAQVYQSEKHDADRGLSKMSRAVNGESPKTGGDGKALLHSGSSSSKEKSETEKETSLVKQTLAKMQQQEQKEQAQWTPTKFPSKNALGHIDKCREESSKQESQLLEKVSGHSTSKGDRVIQNESKRRKAEEIPKCQASKGDKKESSKSLVRQGSFTIDKPSSNIPIELIPHINKQNSSVPTALALTSASRLRERSDSLDTDSSMDTTLILKDTEAVMAFLEAKLREDNNKTDEGPDTPSYNRDNSISPESDVDTASTISLVTGETERKSTQKRKSFTSLYKDRCSTSSPSKDVTKSGSREKIEKKAKSRSADIGARADGRKFVQSSGRIRQPSIDLTDDDQTSSVPHSAISDIMSSDQETYSCKSHGRTPLTSADEHNIHSKLEGGKATKSKTSPVASGSTSKSTTLPRPRPTRTSLLRRARLGEASDSELADADKASVASEVSTTSSTSKPPTGRRTISRIDLLAQPRRTRLGSLSARSDSEATISRSSASARTAEAVIRSGARLVPSDKLSPRTRANSISRLSDSKVKSMSSTHGSPSVNSRWRRFPTDYASTSEDEFGSNRNSPKHTRLRTSPALKTTRMQSTGSAMPASSSFKHRIKEQEDYIRDWTAHREEIARISQDLALIAREINDVAGEIDSVTSSGTAPSTTVSTAATTPGSAIDTREEVGDLHGEMHKLVDRVFDESLNFRKIPPLVHSKTPEGNNGRSVDSRPQPAEHPDHLTITRRRTWSRDEVMGDNLLLSSVFQFSRKIRQSIDKTAGKIRILFKDKDRNWDDIENKLRAESEVPIVKTSSMEISSILQELKRVEKQLQVINAMIDPDGTLEALNNMGFPNAILPSPPKQKSSPVNNHSSPSQTPALCPPETRALHPAAAGVAAAASTEFENAESEADFSIHFNRFNPDGEEEDVTVHE.

One can recognise an FHA domain in the interval Ile23–Ile73. Disordered regions lie at residues Leu121 to Gly172, Lys299 to Thr323, Gln338 to Ser447, and Ser461 to Ser508. Phosphoserine is present on Ser141. Positions Glu155–Met164 are enriched in basic and acidic residues. Residues Glu347–Lys357 are compositionally biased toward basic and acidic residues. Phosphoserine occurs at positions 355 and 358. The residue at position 363 (Tyr363) is a Phosphotyrosine. The segment covering Lys407–Glu418 has biased composition (basic and acidic residues). Ser443, Ser463, and Ser494 each carry phosphoserine. The residue at position 498 (Thr498) is a Phosphothreonine. Phosphoserine occurs at positions 568, 577, 628, and 631. Residues Glu602 to Val854 form a disordered region. Polar residues predominate over residues Leu620–Ser631. Thr639 carries the post-translational modification Phosphothreonine. The span at Asn645–Arg654 shows a compositional bias: basic and acidic residues. Ser662 carries the phosphoserine modification. Residues Glu663–Leu691 are compositionally biased toward basic and acidic residues. Phosphoserine is present on Ser718. Residues Ser720–Ser731 are compositionally biased toward basic and acidic residues. Residue Thr752 is modified to Phosphothreonine. Composition is skewed to basic and acidic residues over residues His764–Lys774 and Ser789–Ser821. A compositionally biased stretch (polar residues) spans Lys822–Ile839. A phosphoserine mark is found at Ser829, Ser870, and Ser872. A targeting to microtubules region spans residues Ile844–Glu1588. The span at Leu899 to Glu908 shows a compositional bias: basic and acidic residues. Disordered stretches follow at residues Leu899–Arg1222 and Ala1228–Leu1247. 2 positions are modified to phosphothreonine: Thr906 and Thr912. The span at Pro913–Thr937 shows a compositional bias: polar residues. 3 positions are modified to phosphoserine: Ser922, Ser925, and Ser950. Residues Asp967–Lys980 are compositionally biased toward basic and acidic residues. Position 1008 is a phosphoserine (Ser1008). Phosphothreonine is present on Thr1012. Positions Ile1028–Cys1038 are enriched in polar residues. Thr1047 is subject to Phosphothreonine. Ser1048 is modified (phosphoserine). Residues Ala1049 to Lys1062 show a composition bias toward basic and acidic residues. Residues Ser1075 to Leu1093 show a composition bias toward low complexity. A phosphoserine mark is found at Ser1102, Ser1104, Ser1122, Ser1123, Ser1135, Ser1150, and Ser1155. Residues Asp1103–Glu1588 are targeting to centrosomes. Residues Ala1112–Pro1128 show a composition bias toward low complexity. A compositionally biased stretch (low complexity) spans Glu1158–Ala1173. Ser1188, Ser1195, Ser1200, Ser1229, Ser1231, Ser1241, Ser1260, and Ser1270 each carry phosphoserine. Residues Thr1191–Ser1218 are compositionally biased toward polar residues. The disordered stretch occupies residues Ser1315 to Pro1334. Residue Ser1362 is modified to Phosphoserine. Residues Pro1370 to Leu1398 are disordered. Residues Lys1467–Asp1495 are a coiled coil. The tract at residues Ala1511–Glu1540 is disordered. Positions Lys1518–Pro1534 are enriched in polar residues. 2 positions are modified to phosphoserine: Ser1521 and Ser1522.

Belongs to the CEP170 family. As to quaternary structure, interacts with CCDC68 and CCDC120; leading to recruitment to centrosomes. Interacts with PLK1. Interacts with NIN. Interacts with FHDC1. Interacts with CCDC61. Interacts with TBK1; efficient complex formation may be dependent on the presence of CCDC61. Phosphorylated; probably by PLK1.

The protein resides in the cytoplasm. The protein localises to the cytoskeleton. It is found in the microtubule organizing center. Its subcellular location is the centrosome. It localises to the centriole. The protein resides in the spindle. In terms of biological role, plays a role in microtubule organization. Required for centriole subdistal appendage assembly. The chain is Centrosomal protein of 170 kDa (Cep170) from Mus musculus (Mouse).